Reading from the N-terminus, the 433-residue chain is UPF0761 membrane protein Sde_0901 (433 aa).

6 consecutive transmembrane segments (helical) span residues 46–66 (LFAM…FPAF), 103–123 (LSAA…TNIE), 142–162 (FLLY…GLAM), 185–205 (FFSY…FAAV), 217–237 (IGGI…GWVV), and 247–267 (GAFA…MIIL).

The protein belongs to the UPF0761 family.

It localises to the cell inner membrane. In Saccharophagus degradans (strain 2-40 / ATCC 43961 / DSM 17024), this protein is UPF0761 membrane protein Sde_0901.